The sequence spans 307 residues: Myeloid-associated differentiation marker-like protein 2 (307 aa).

2 MARVEL domains span residues Ala-17 to Gly-154 and Tyr-159 to Phe-303. 7 consecutive transmembrane segments (helical) span residues Phe-53 to Phe-73, Ala-90 to Phe-110, Leu-129 to Thr-149, Val-163 to Val-183, Val-198 to Gly-218, Arg-229 to Trp-249, and Leu-278 to Ser-298.

It belongs to the MAL family.

The protein resides in the membrane. The chain is Myeloid-associated differentiation marker-like protein 2 (MYADML2) from Homo sapiens (Human).